The following is a 100-amino-acid chain: Replication restart protein PriB (100 aa).

Residues 1 to 100 (MTNRMELSGT…VLHADNITQI (100 aa)) form the SSB domain.

The protein belongs to the PriB family. As to quaternary structure, homodimer. Interacts with PriA and DnaT. Component of the replication restart primosome. Primosome assembly occurs via a 'hand-off' mechanism. PriA binds to replication forks, subsequently PriB then DnaT bind; DnaT then displaces ssDNA to generate the helicase loading substrate.

Involved in the restart of stalled replication forks, which reloads the replicative helicase on sites other than the origin of replication; the PriA-PriB pathway is the major replication restart pathway. During primosome assembly it facilitates complex formation between PriA and DnaT on DNA; stabilizes PriA on DNA. Stimulates the DNA unwinding activity of PriA helicase. This chain is Replication restart protein PriB, found in Vibrio parahaemolyticus serotype O3:K6 (strain RIMD 2210633).